The primary structure comprises 2290 residues: Autophagy-related protein 2 (2290 aa).

The Chorein N-terminal domain maps to 10 to 99 (WCKVMLQRYM…MCIEDLQLTF (90 aa)). The interval 829–1549 (DSMMKSVSAD…PNRDHSAFVV (721 aa)) is required for epg-6 binding. 4 disordered regions span residues 1678-1727 (IGSK…LGDL), 1805-1851 (DDLF…DLTG), 1898-1919 (SETE…PARN), and 1967-2003 (EHGN…ERNK). The segment covering 1681–1692 (KKTTPKTSVSSS) has biased composition (low complexity). Pro residues predominate over residues 1714–1723 (RPSPVQPPTP). The span at 1810–1830 (QSYSSSSSETESESSAPQSSQ) shows a compositional bias: low complexity. Residues 1972 to 2011 (LDSIDNEDDNEKQKIEEEMEEDEKEEEEERNKEIQEAVER) adopt a coiled-coil conformation. The span at 1988–1999 (EEMEEDEKEEEE) shows a compositional bias: acidic residues.

Belongs to the ATG2 family. In terms of assembly, interacts with epg-6; the interaction is direct.

Its subcellular location is the preautophagosomal structure membrane. It is found in the lipid droplet. It localises to the endoplasmic reticulum membrane. The protein localises to the cytoplasm. It carries out the reaction a 1,2-diacyl-sn-glycero-3-phospho-L-serine(in) = a 1,2-diacyl-sn-glycero-3-phospho-L-serine(out). It catalyses the reaction a 1,2-diacyl-sn-glycero-3-phosphoethanolamine(in) = a 1,2-diacyl-sn-glycero-3-phosphoethanolamine(out). Lipid transfer protein involved in autophagosome assembly and in the distribution of atg-9 and atg-13 during the autophagy-mediated degradation of protein aggregates. Tethers the edge of the isolation membrane (IM) to the endoplasmic reticulum (ER) and mediates direct lipid transfer from ER to IM for IM expansion. Binds to the ER exit site (ERES), which is the membrane source for autophagosome formation, and extracts phospholipids from the membrane source to the IM for membrane expansion. Involved in autophagy-mediated degradation of ribosomal RNA and ribosomal proteins in lysosomes, which is essential for maintaining nucleotide homeostasis. The chain is Autophagy-related protein 2 from Caenorhabditis elegans.